Consider the following 282-residue polypeptide: Parvulin-like PPIase (282 aa).

Residues 1–20 form the signal peptide; that stretch reads MKKLSVIFLSVSMLSGIAFA. The region spanning 138-231 is the PpiC domain; that stretch reads KEQIKVAHIL…FGWHIIKVLE (94 aa).

It belongs to the PpiC/parvulin rotamase family.

It is found in the cell outer membrane. It catalyses the reaction [protein]-peptidylproline (omega=180) = [protein]-peptidylproline (omega=0). The polypeptide is Parvulin-like PPIase (plp) (Rickettsia felis (strain ATCC VR-1525 / URRWXCal2) (Rickettsia azadi)).